The sequence spans 348 residues: Neuronal growth regulator 1 (348 aa).

A signal peptide spans 1–31; that stretch reads MVLLAQGACCSNQWLAAVLLSLCSCLPAGQS. Ig-like C2-type domains lie at 32–128, 133–215, and 219–307; these read VDFP…VHLT, PKIY…RVIV, and PTIQ…LPLN. Cysteine 54 and cysteine 112 are oxidised to a cystine. N-linked (GlcNAc...) asparagine glycosylation is found at asparagine 67 and asparagine 149. Intrachain disulfides connect cysteine 154/cysteine 197 and cysteine 239/cysteine 291. Tyrosine 181 is subject to Phosphotyrosine. 4 N-linked (GlcNAc...) asparagine glycosylation sites follow: asparagine 269, asparagine 280, asparagine 288, and asparagine 301. A lipid anchor (GPI-anchor amidated glycine) is attached at glycine 318. The propeptide at 319–348 is removed in mature form; that stretch reads SACDLFSCWSLALTLSSVISIFYLKNAILQ.

It belongs to the immunoglobulin superfamily. IgLON family. Expressed in brain.

It is found in the cell membrane. May be involved in cell-adhesion. May function as a trans-neural growth-promoting factor in regenerative axon sprouting in the mammalian brain. This chain is Neuronal growth regulator 1 (Negr1), found in Mus musculus (Mouse).